The primary structure comprises 286 residues: Probable endonuclease 4 (286 aa).

Zn(2+) contacts are provided by histidine 72, histidine 112, glutamate 147, aspartate 181, histidine 184, histidine 215, aspartate 228, histidine 230, and glutamate 260.

It belongs to the AP endonuclease 2 family. It depends on Zn(2+) as a cofactor.

It catalyses the reaction Endonucleolytic cleavage to 5'-phosphooligonucleotide end-products.. Its function is as follows. Endonuclease IV plays a role in DNA repair. It cleaves phosphodiester bonds at apurinic or apyrimidinic (AP) sites, generating a 3'-hydroxyl group and a 5'-terminal sugar phosphate. The polypeptide is Probable endonuclease 4 (Mycoplasma pneumoniae (strain ATCC 29342 / M129 / Subtype 1) (Mycoplasmoides pneumoniae)).